Reading from the N-terminus, the 178-residue chain is Methylmalonyl-CoA epimerase, mitochondrial (178 aa).

The N-terminal 38 residues, 1-38 (MRRVVKAAALAAGATGLFSRVQTSVAIGRSFSTPQSQF), are a transit peptide targeting the mitochondrion. Positions 49-178 (RLNHVAVAVP…GGVLVELEQA (130 aa)) constitute a VOC domain. His-52 provides a ligand contact to Co(2+). N6-succinyllysine is present on Lys-116. Position 124 (His-124) interacts with Co(2+). Residue Lys-152 is modified to N6-acetyllysine; alternate. Position 152 is an N6-succinyllysine; alternate (Lys-152). Glu-174 contacts Co(2+).

It belongs to the methylmalonyl-CoA epimerase family.

It localises to the mitochondrion. The enzyme catalyses (R)-methylmalonyl-CoA = (S)-methylmalonyl-CoA. Its function is as follows. Methylmalonyl-CoA epimerase involved in propionyl-CoA metabolism. In Mus musculus (Mouse), this protein is Methylmalonyl-CoA epimerase, mitochondrial.